We begin with the raw amino-acid sequence, 242 residues long: UPF0273 protein MJ1359 (242 aa).

The 241-residue stretch at 2–242 folds into the KaiC domain; it reads KRVKTGIPGM…VYPDKVLKLR (241 aa). Residue 29-36 participates in ATP binding; sequence GGPGTGKS.

It belongs to the UPF0273 family.

The sequence is that of UPF0273 protein MJ1359 from Methanocaldococcus jannaschii (strain ATCC 43067 / DSM 2661 / JAL-1 / JCM 10045 / NBRC 100440) (Methanococcus jannaschii).